We begin with the raw amino-acid sequence, 828 residues long: Conserved oligomeric Golgi complex subunit 3 (828 aa).

Alanine 2 carries the N-acetylalanine modification. A disordered region spans residues 504 to 543 (DEQKKVPSEASFSDVHLEEGESNSLTKSGSTESLNPRPQT). Over residues 525–543 (SNSLTKSGSTESLNPRPQT) the composition is skewed to polar residues. Serine 663 carries the post-translational modification Phosphoserine.

Belongs to the COG3 family. As to quaternary structure, component of the conserved oligomeric Golgi complex which is composed of eight different subunits and is required for normal Golgi morphology and localization. Interacts with TMEM115. Widely expressed with highest levels in pancreas and testis and lowest levels in lung.

The protein resides in the golgi apparatus. The protein localises to the golgi stack membrane. Its function is as follows. Involved in ER-Golgi transport. Also involved in retrograde (Golgi to ER) transport. The protein is Conserved oligomeric Golgi complex subunit 3 (COG3) of Homo sapiens (Human).